The primary structure comprises 65 residues: Large ribosomal subunit protein bL35 (65 aa).

It belongs to the bacterial ribosomal protein bL35 family.

The protein is Large ribosomal subunit protein bL35 of Caldicellulosiruptor bescii (strain ATCC BAA-1888 / DSM 6725 / KCTC 15123 / Z-1320) (Anaerocellum thermophilum).